We begin with the raw amino-acid sequence, 266 residues long: Gas vesicle protein L (266 aa).

The protein belongs to the gas vesicle GvpF/GvpL family.

The protein resides in the gas vesicle. In terms of biological role, might be involved in nucleating gas vesicle formation. A minor component of the gas vesicle. Gas vesicles are hollow, gas filled proteinaceous nanostructures found in some microorganisms. It is not clear what function gas vesicles perform in soil bacteria. The polypeptide is Gas vesicle protein L (Streptomyces sp. (strain CB03234)).